The following is a 636-amino-acid chain: Iron transport multicopper oxidase FET3 (636 aa).

Residues M1–A21 form the signal peptide. The Extracellular portion of the chain corresponds to E22–K559. 3 N-linked (GlcNAc...) asparagine glycosylation sites follow: N27, N74, and N77. Plastocyanin-like domains follow at residues W32 to D146 and S157 to K301. Cu cation-binding residues include H81 and H83. Residues N88 and N113 are each glycosylated (N-linked (GlcNAc...) asparagine). H126 and H128 together coordinate Cu cation. N-linked (GlcNAc...) asparagine glycans are attached at residues N194, N198, N244, N265, N292, N300, N359, and N381. The Plastocyanin-like 3 domain occupies Y362 to P502. Residues H413, H416, H418, H483, C484, H485, and H489 each coordinate Cu cation. The chain crosses the membrane as a helical span at residues G560–M584. The Cytoplasmic portion of the chain corresponds to D585–F636.

Belongs to the multicopper oxidase family. Cu cation is required as a cofactor.

It is found in the cell membrane. The enzyme catalyses 4 Fe(2+) + O2 + 4 H(+) = 4 Fe(3+) + 2 H2O. The catalysed reaction is 4 Cu(+) + O2 + 4 H(+) = 4 Cu(2+) + 2 H2O. Iron transport multicopper ferroxidase required for Fe(2+) ion high affinity uptake. Required to oxidize Fe(2+) to Fe(3+), which is then transported into the cell via the ferric iron permease FTR1. Essential component of copper-dependent iron transport. Also has cuprous oxidase activity. The polypeptide is Iron transport multicopper oxidase FET3 (FET3) (Saccharomyces cerevisiae (strain ATCC 204508 / S288c) (Baker's yeast)).